Here is a 137-residue protein sequence, read N- to C-terminus: Small ribosomal subunit protein uS12 (137 aa).

Disordered regions lie at residues 1–22 (MPTINQLVRKGRKSHKGKSKSP) and 37–57 (KNPSPQKRGVATRVGTMTPKK). Positions 9–19 (RKGRKSHKGKS) are enriched in basic residues. At Asp102 the chain carries 3-methylthioaspartic acid.

It belongs to the universal ribosomal protein uS12 family. Part of the 30S ribosomal subunit. Contacts proteins S8 and S17. May interact with IF1 in the 30S initiation complex.

Functionally, with S4 and S5 plays an important role in translational accuracy. In terms of biological role, interacts with and stabilizes bases of the 16S rRNA that are involved in tRNA selection in the A site and with the mRNA backbone. Located at the interface of the 30S and 50S subunits, it traverses the body of the 30S subunit contacting proteins on the other side and probably holding the rRNA structure together. The combined cluster of proteins S8, S12 and S17 appears to hold together the shoulder and platform of the 30S subunit. This chain is Small ribosomal subunit protein uS12, found in Limosilactobacillus fermentum (strain NBRC 3956 / LMG 18251) (Lactobacillus fermentum).